We begin with the raw amino-acid sequence, 477 residues long: Bifunctional protein HldE (477 aa).

The ribokinase stretch occupies residues 1–321 (MKILKSFTPR…EYEASLHKST (321 aa)). 198–201 (NKKE) is a binding site for ATP. Residue aspartate 266 is part of the active site. The interval 348–477 (FTNGCFDILH…IQKIKGDLHV (130 aa)) is cytidylyltransferase.

This sequence in the N-terminal section; belongs to the carbohydrate kinase PfkB family. In the C-terminal section; belongs to the cytidylyltransferase family. As to quaternary structure, homodimer.

The catalysed reaction is D-glycero-beta-D-manno-heptose 7-phosphate + ATP = D-glycero-beta-D-manno-heptose 1,7-bisphosphate + ADP + H(+). The enzyme catalyses D-glycero-beta-D-manno-heptose 1-phosphate + ATP + H(+) = ADP-D-glycero-beta-D-manno-heptose + diphosphate. Its pathway is nucleotide-sugar biosynthesis; ADP-L-glycero-beta-D-manno-heptose biosynthesis; ADP-L-glycero-beta-D-manno-heptose from D-glycero-beta-D-manno-heptose 7-phosphate: step 1/4. It participates in nucleotide-sugar biosynthesis; ADP-L-glycero-beta-D-manno-heptose biosynthesis; ADP-L-glycero-beta-D-manno-heptose from D-glycero-beta-D-manno-heptose 7-phosphate: step 3/4. Functionally, catalyzes the phosphorylation of D-glycero-D-manno-heptose 7-phosphate at the C-1 position to selectively form D-glycero-beta-D-manno-heptose-1,7-bisphosphate. Its function is as follows. Catalyzes the ADP transfer from ATP to D-glycero-beta-D-manno-heptose 1-phosphate, yielding ADP-D-glycero-beta-D-manno-heptose. In Sulfurimonas denitrificans (strain ATCC 33889 / DSM 1251) (Thiomicrospira denitrificans (strain ATCC 33889 / DSM 1251)), this protein is Bifunctional protein HldE.